We begin with the raw amino-acid sequence, 240 residues long: Large ribosomal subunit protein uL2 (240 aa).

Over residues 1–10 (MGHRISTQSR) the composition is skewed to polar residues. Disordered stretches follow at residues 1 to 20 (MGHRISTQSRGKGGPTYRAP) and 204 to 240 (FGGGGHQHPGKPKTVARGASPGRKVGSVAARRTGYRR).

This sequence belongs to the universal ribosomal protein uL2 family. In terms of assembly, part of the 50S ribosomal subunit. Forms a bridge to the 30S subunit in the 70S ribosome.

Its function is as follows. One of the primary rRNA binding proteins. Required for association of the 30S and 50S subunits to form the 70S ribosome, for tRNA binding and peptide bond formation. It has been suggested to have peptidyltransferase activity; this is somewhat controversial. Makes several contacts with the 16S rRNA in the 70S ribosome. The protein is Large ribosomal subunit protein uL2 of Methanocorpusculum labreanum (strain ATCC 43576 / DSM 4855 / Z).